The following is a 417-amino-acid chain: MYKKMIDILKAELVPALGCTEPIAIALASAKAREVLGEMPDELTVECSSNIIKNAKSVVVPMTKNLKGIEAAAIVGLIGGDANKKLEVLTTVTEEDLEETKRLLATGFCQTKFLQTTEKLHIIVRMKKGENSSLVELVKTHTGIARIEKDGVVTFEEEIEDCDDSTVDYSVLSVASILDFANQVDIEEVRPILERQIEYNTKIAKEGLRNTYGVNVGSTLLDVYGDDVKIRAKAMPAAGSDARMNGCELPVIINSGSGNQGMTVSLPVIEFGKMLDVEDEKILRALIISNLIAIYQKSEIGRLSAYCGAVSAAAGAGAGITYLYGGNEEQINQTIINTLANVSGIVCDGAKSSCAAKIASAVDAAIVATMISLKGKGFLSGDGIVKDTIQKTIDGVVTLAKEGMQETDEVIVKIMLN.

The protein belongs to the UPF0597 family.

The chain is UPF0597 protein Cphy_1256 from Lachnoclostridium phytofermentans (strain ATCC 700394 / DSM 18823 / ISDg) (Clostridium phytofermentans).